A 1030-amino-acid polypeptide reads, in one-letter code: Leucine-rich repeat and coiled-coil domain-containing protein 1 (1030 aa).

LRR repeat units follow at residues 7–28 (RNRE…CLNS), 29–50 (NLYS…RHLC), 51–72 (YLQH…DSLA), 73–94 (SLQS…EKLF), 95–116 (NLKK…IPLH), and 121–142 (KLSH…LQST). One can recognise an LRRCT domain in the interval 160-200 (NPVCHALGYREIILENLPQLNSLDGLDRSGDPVTAHEVDSM). The tract at residues 298 to 401 (KSEQTKLKAK…GQILGKPHAI (104 aa)) is disordered. A compositionally biased stretch (basic and acidic residues) spans 300–311 (EQTKLKAKRDTD). Composition is skewed to polar residues over residues 338 to 368 (KTSQ…SRKQ) and 378 to 393 (ETSL…STGQ). The stretch at 432–645 (RERRWKAEQV…DLEDEFRAAL (214 aa)) forms a coiled coil.

Belongs to the LRRCC1 family.

It is found in the cytoplasm. It localises to the cytoskeleton. The protein resides in the microtubule organizing center. Its subcellular location is the centrosome. The protein localises to the centriole. In terms of biological role, required for the organization of the mitotic spindle. Maintains the structural integrity of centrosomes during mitosis. The polypeptide is Leucine-rich repeat and coiled-coil domain-containing protein 1 (lrrcc1) (Xenopus laevis (African clawed frog)).